The following is a 1401-amino-acid chain: DNA-directed RNA polymerase subunit beta' (1401 aa).

Zn(2+)-binding residues include Cys71, Cys73, Cys86, and Cys89. 3 residues coordinate Mg(2+): Asp462, Asp464, and Asp466. Residues Cys810, Cys884, Cys891, and Cys894 each coordinate Zn(2+). The segment at 1378 to 1401 (EKQATIVPSAPEPEPLALPTPEQS) is disordered.

It belongs to the RNA polymerase beta' chain family. The RNAP catalytic core consists of 2 alpha, 1 beta, 1 beta' and 1 omega subunit. When a sigma factor is associated with the core the holoenzyme is formed, which can initiate transcription. The cofactor is Mg(2+). Zn(2+) serves as cofactor.

The enzyme catalyses RNA(n) + a ribonucleoside 5'-triphosphate = RNA(n+1) + diphosphate. DNA-dependent RNA polymerase catalyzes the transcription of DNA into RNA using the four ribonucleoside triphosphates as substrates. This chain is DNA-directed RNA polymerase subunit beta', found in Rhodopseudomonas palustris (strain BisB18).